Here is a 149-residue protein sequence, read N- to C-terminus: Stathmin (149 aa).

An N-acetylalanine modification is found at alanine 2. A Phosphoserine modification is found at serine 4. Residues 4 to 145 (SDIQVKELEK…NKESKDPADE (142 aa)) form the SLD domain. Lysine 9 bears the N6-acetyllysine mark. Serine 16 is modified (phosphoserine). Phosphoserine; by CDK1, MAPK1 and MAPK3 is present on serine 25. Lysine 29 is modified (N6-methyllysine). The residue at position 31 (serine 31) is a Phosphoserine. The residue at position 38 (serine 38) is a Phosphoserine; by CDK1, MAPK1 and MAPK3. The stretch at 41–140 (KKKDLSLEEI…EEVRKNKESK (100 aa)) forms a coiled coil. Position 63 is a phosphoserine; by PKA (serine 63). 2 positions are modified to N6-acetyllysine: lysine 100 and lysine 119. Over residues 121–143 (ERLREKDKHIEEVRKNKESKDPA) the composition is skewed to basic and acidic residues. The interval 121–149 (ERLREKDKHIEEVRKNKESKDPADETEAD) is disordered.

Belongs to the stathmin family. As to quaternary structure, binds to two alpha/beta-tubulin heterodimers. Interacts with KIST. In terms of processing, many different phosphorylated forms are observed depending on specific combinations among the sites which can be phosphorylated. MAPK is responsible for the phosphorylation of stathmin in response to NGF. Phosphorylation at Ser-16 seems to be required for neuron polarization.

The protein resides in the cytoplasm. It localises to the cytoskeleton. In terms of biological role, involved in the regulation of the microtubule (MT) filament system by destabilizing microtubules. Prevents assembly and promotes disassembly of microtubules. Its phosphorylation at Ser-16 may be required for axon formation during neurogenesis. Involved in the control of the learned and innate fear. In Bos taurus (Bovine), this protein is Stathmin (STMN1).